The chain runs to 553 residues: CTP synthase (553 aa).

The segment at 1–270 (MTKFVFVTGG…DRIICEELRI (270 aa)) is amidoligase domain. Position 13 (Ser-13) interacts with CTP. Residue Ser-13 participates in UTP binding. Residues 14 to 19 (SLGKGI) and Asp-71 each bind ATP. 2 residues coordinate Mg(2+): Asp-71 and Glu-144. CTP is bound by residues 151 to 153 (DIE), 191 to 196 (KTKPTQ), and Lys-227. Residues 191-196 (KTKPTQ) and Lys-227 each bind UTP. The Glutamine amidotransferase type-1 domain occupies 295-547 (TIGMVGKYVD…VEAALAHQQN (253 aa)). Residue Gly-356 participates in L-glutamine binding. The active-site Nucleophile; for glutamine hydrolysis is Cys-383. L-glutamine is bound by residues 384-387 (LGMQ), Glu-407, and Arg-473. Active-site residues include His-520 and Glu-522.

It belongs to the CTP synthase family. Homotetramer.

It catalyses the reaction UTP + L-glutamine + ATP + H2O = CTP + L-glutamate + ADP + phosphate + 2 H(+). It carries out the reaction L-glutamine + H2O = L-glutamate + NH4(+). The enzyme catalyses UTP + NH4(+) + ATP = CTP + ADP + phosphate + 2 H(+). It participates in pyrimidine metabolism; CTP biosynthesis via de novo pathway; CTP from UDP: step 2/2. Allosterically activated by GTP, when glutamine is the substrate; GTP has no effect on the reaction when ammonia is the substrate. The allosteric effector GTP functions by stabilizing the protein conformation that binds the tetrahedral intermediate(s) formed during glutamine hydrolysis. Inhibited by the product CTP, via allosteric rather than competitive inhibition. Functionally, catalyzes the ATP-dependent amination of UTP to CTP with either L-glutamine or ammonia as the source of nitrogen. Regulates intracellular CTP levels through interactions with the four ribonucleotide triphosphates. The sequence is that of CTP synthase from Ralstonia pickettii (strain 12J).